The chain runs to 326 residues: Probable 9-O-acetyl-N-acetylneuraminic acid deacetylase (326 aa).

The first 21 residues, 1–21, serve as a signal peptide directing secretion; the sequence is MNAIISPDYYYVLTVAGQSNA.

Its subcellular location is the periplasm. In terms of biological role, probably catalyzes the hydrolysis of the 9-O-acetyl group of 9-O-acetyl-N-acetylneuraminate (Neu5,9Ac2). Is required for growth of E.coli on Neu5,9Ac2, an alternative sialic acid commonly found in mammalian host mucosal sites, in particular in the human intestine. This chain is Probable 9-O-acetyl-N-acetylneuraminic acid deacetylase (nanS), found in Escherichia coli (strain K12).